A 325-amino-acid chain; its full sequence is Formimidoylglutamase (325 aa).

Histidine 130, aspartate 156, histidine 158, aspartate 160, cysteine 244, and aspartate 246 together coordinate Mn(2+).

It belongs to the arginase family. It depends on Mn(2+) as a cofactor.

The enzyme catalyses N-formimidoyl-L-glutamate + H2O = formamide + L-glutamate. It participates in amino-acid degradation; L-histidine degradation into L-glutamate; L-glutamate from N-formimidoyl-L-glutamate (hydrolase route): step 1/1. Its function is as follows. Catalyzes the conversion of N-formimidoyl-L-glutamate to L-glutamate and formamide. This Geobacillus sp. (strain WCH70) protein is Formimidoylglutamase.